The chain runs to 227 residues: Phosphoribosylformylglycinamidine synthase subunit PurQ (227 aa).

One can recognise a Glutamine amidotransferase type-1 domain in the interval 3–227 (FAVIVFPGSN…NWRESHVTAS (225 aa)). The active-site Nucleophile is the cysteine 86. Residues histidine 194 and glutamate 196 contribute to the active site.

Part of the FGAM synthase complex composed of 1 PurL, 1 PurQ and 2 PurS subunits.

Its subcellular location is the cytoplasm. The enzyme catalyses N(2)-formyl-N(1)-(5-phospho-beta-D-ribosyl)glycinamide + L-glutamine + ATP + H2O = 2-formamido-N(1)-(5-O-phospho-beta-D-ribosyl)acetamidine + L-glutamate + ADP + phosphate + H(+). The catalysed reaction is L-glutamine + H2O = L-glutamate + NH4(+). Its pathway is purine metabolism; IMP biosynthesis via de novo pathway; 5-amino-1-(5-phospho-D-ribosyl)imidazole from N(2)-formyl-N(1)-(5-phospho-D-ribosyl)glycinamide: step 1/2. Functionally, part of the phosphoribosylformylglycinamidine synthase complex involved in the purines biosynthetic pathway. Catalyzes the ATP-dependent conversion of formylglycinamide ribonucleotide (FGAR) and glutamine to yield formylglycinamidine ribonucleotide (FGAM) and glutamate. The FGAM synthase complex is composed of three subunits. PurQ produces an ammonia molecule by converting glutamine to glutamate. PurL transfers the ammonia molecule to FGAR to form FGAM in an ATP-dependent manner. PurS interacts with PurQ and PurL and is thought to assist in the transfer of the ammonia molecule from PurQ to PurL. The polypeptide is Phosphoribosylformylglycinamidine synthase subunit PurQ (Shouchella clausii (strain KSM-K16) (Alkalihalobacillus clausii)).